The primary structure comprises 709 residues: Phosphoribosylformylglycinamidine synthase subunit PurL (709 aa).

Residue His-36 is part of the active site. Residues Tyr-39 and Lys-80 each coordinate ATP. Glu-82 provides a ligand contact to Mg(2+). Residues 83 to 86 (SHNH) and Arg-105 each bind substrate. His-84 serves as the catalytic Proton acceptor. Residue Asp-106 participates in Mg(2+) binding. Residue Gln-226 coordinates substrate. Asp-252 provides a ligand contact to Mg(2+). 294–296 (ETQ) contributes to the substrate binding site. 2 residues coordinate ATP: Asp-470 and Gly-507. Ser-510 contributes to the substrate binding site.

This sequence belongs to the FGAMS family. As to quaternary structure, monomer. Part of the FGAM synthase complex composed of 1 PurL, 1 PurQ and 2 PurS subunits.

Its subcellular location is the cytoplasm. The catalysed reaction is N(2)-formyl-N(1)-(5-phospho-beta-D-ribosyl)glycinamide + L-glutamine + ATP + H2O = 2-formamido-N(1)-(5-O-phospho-beta-D-ribosyl)acetamidine + L-glutamate + ADP + phosphate + H(+). The protein operates within purine metabolism; IMP biosynthesis via de novo pathway; 5-amino-1-(5-phospho-D-ribosyl)imidazole from N(2)-formyl-N(1)-(5-phospho-D-ribosyl)glycinamide: step 1/2. Part of the phosphoribosylformylglycinamidine synthase complex involved in the purines biosynthetic pathway. Catalyzes the ATP-dependent conversion of formylglycinamide ribonucleotide (FGAR) and glutamine to yield formylglycinamidine ribonucleotide (FGAM) and glutamate. The FGAM synthase complex is composed of three subunits. PurQ produces an ammonia molecule by converting glutamine to glutamate. PurL transfers the ammonia molecule to FGAR to form FGAM in an ATP-dependent manner. PurS interacts with PurQ and PurL and is thought to assist in the transfer of the ammonia molecule from PurQ to PurL. This Saccharolobus islandicus (strain M.14.25 / Kamchatka #1) (Sulfolobus islandicus) protein is Phosphoribosylformylglycinamidine synthase subunit PurL.